The sequence spans 154 residues: 6,7-dimethyl-8-ribityllumazine synthase (154 aa).

Residues Phe-22, 56-58 (AFE), and 80-82 (TVI) contribute to the 5-amino-6-(D-ribitylamino)uracil site. 85–86 (ST) is a (2S)-2-hydroxy-3-oxobutyl phosphate binding site. The active-site Proton donor is the His-88. Phe-113 contributes to the 5-amino-6-(D-ribitylamino)uracil binding site. Arg-127 provides a ligand contact to (2S)-2-hydroxy-3-oxobutyl phosphate.

This sequence belongs to the DMRL synthase family.

It catalyses the reaction (2S)-2-hydroxy-3-oxobutyl phosphate + 5-amino-6-(D-ribitylamino)uracil = 6,7-dimethyl-8-(1-D-ribityl)lumazine + phosphate + 2 H2O + H(+). The protein operates within cofactor biosynthesis; riboflavin biosynthesis; riboflavin from 2-hydroxy-3-oxobutyl phosphate and 5-amino-6-(D-ribitylamino)uracil: step 1/2. Functionally, catalyzes the formation of 6,7-dimethyl-8-ribityllumazine by condensation of 5-amino-6-(D-ribitylamino)uracil with 3,4-dihydroxy-2-butanone 4-phosphate. This is the penultimate step in the biosynthesis of riboflavin. This Lactococcus lactis subsp. cremoris (strain MG1363) protein is 6,7-dimethyl-8-ribityllumazine synthase.